The chain runs to 281 residues: 4-diphosphocytidyl-2-C-methyl-D-erythritol kinase (281 aa).

Residue K11 is part of the active site. Residue 92–102 coordinates ATP; the sequence is LVSAGLAGGSA. The active site involves D132.

It belongs to the GHMP kinase family. IspE subfamily.

The enzyme catalyses 4-CDP-2-C-methyl-D-erythritol + ATP = 4-CDP-2-C-methyl-D-erythritol 2-phosphate + ADP + H(+). Its pathway is isoprenoid biosynthesis; isopentenyl diphosphate biosynthesis via DXP pathway; isopentenyl diphosphate from 1-deoxy-D-xylulose 5-phosphate: step 3/6. Functionally, catalyzes the phosphorylation of the position 2 hydroxy group of 4-diphosphocytidyl-2C-methyl-D-erythritol. In Ehrlichia ruminantium (strain Gardel), this protein is 4-diphosphocytidyl-2-C-methyl-D-erythritol kinase.